Here is a 60-residue protein sequence, read N- to C-terminus: Cytotoxin 3 (60 aa).

Intrachain disulfides connect cysteine 3–cysteine 21, cysteine 14–cysteine 38, cysteine 42–cysteine 53, and cysteine 54–cysteine 59.

It belongs to the three-finger toxin family. Short-chain subfamily. Type IA cytotoxin sub-subfamily. Monomer in solution; Homodimer and oligomer in the presence of negatively charged lipids forming a pore with a size ranging between 20 and 30 Angstroms. As to expression, expressed by the venom gland.

The protein resides in the secreted. It localises to the target cell membrane. Shows cytolytic activity on many different cells by forming pore in lipid membranes. In vivo, increases heart rate or kills the animal by cardiac arrest. In addition, it binds to heparin with high affinity, interacts with Kv channel-interacting protein 1 (KCNIP1) in a calcium-independent manner, and binds to integrin alpha-V/beta-3 (ITGAV/ITGB3) with moderate affinity. The sequence is that of Cytotoxin 3 from Naja naja (Indian cobra).